A 354-amino-acid polypeptide reads, in one-letter code: Serum paraoxonase/arylesterase 2 (354 aa).

The cysteines at positions 42 and 352 are disulfide-linked. Glutamate 53 and aspartate 54 together coordinate Ca(2+). The active-site Proton acceptor is histidine 114. Ca(2+) is bound by residues isoleucine 116, asparagine 167, aspartate 168, and asparagine 223. Asparagine 254 carries an N-linked (GlcNAc...) asparagine glycan. 2 residues coordinate Ca(2+): aspartate 268 and asparagine 269. 2 N-linked (GlcNAc...) asparagine glycosylation sites follow: asparagine 269 and asparagine 323.

It belongs to the paraoxonase family. In terms of assembly, homotrimer. Ca(2+) serves as cofactor. Post-translationally, the signal sequence is not cleaved. In terms of tissue distribution, widely expressed with highest expression in liver, lung, placenta, testis and heart.

The protein resides in the membrane. The enzyme catalyses a phenyl acetate + H2O = a phenol + acetate + H(+). The catalysed reaction is an N-acyl-L-homoserine lactone + H2O = an N-acyl-L-homoserine + H(+). Capable of hydrolyzing lactones and a number of aromatic carboxylic acid esters. Has antioxidant activity. Is not associated with high density lipoprotein. Prevents LDL lipid peroxidation, reverses the oxidation of mildly oxidized LDL, and inhibits the ability of MM-LDL to induce monocyte chemotaxis. In Homo sapiens (Human), this protein is Serum paraoxonase/arylesterase 2 (PON2).